The chain runs to 680 residues: Lipase 1 (680 aa).

A signal peptide spans 1 to 34 (MKSQNKYSIRKFSVGASSILIATLLFLSGGQAQA). Residues 35–290 (AEKQVNMGNS…AKAKGDQTNK (256 aa)) constitute a propeptide that is removed on maturation. Disordered regions lie at residues 39-58 (VNMG…GDQQ) and 82-260 (KNLH…KNGL). A compositionally biased stretch (polar residues) spans 40–58 (NMGNSQEDTVTAQSIGDQQ). Residues 84-112 (LHNDKTISEENHRKTDDLNKDQLKDDKKS) are compositionally biased toward basic and acidic residues. Composition is skewed to polar residues over residues 162-193 (SQDL…SQRE) and 204-223 (QPQQ…FNNE). Residues 224 to 234 (QEVKPQKDEKT) show a composition bias toward basic and acidic residues. Over residues 235-246 (LSVSDLKNNQKS) the composition is skewed to polar residues. Serine 408 functions as the Nucleophile in the catalytic mechanism. The Charge relay system role is filled by aspartate 600. A Ca(2+)-binding site is contributed by aspartate 638. Histidine 639 acts as the Charge relay system in catalysis. Residues aspartate 641, aspartate 646, and aspartate 649 each contribute to the Ca(2+) site.

It belongs to the AB hydrolase superfamily. Lipase family.

Its subcellular location is the secreted. The enzyme catalyses a triacylglycerol + H2O = a diacylglycerol + a fatty acid + H(+). In Staphylococcus aureus (strain MRSA252), this protein is Lipase 1 (lip1).